Reading from the N-terminus, the 232-residue chain is uncharacterized protein (232 aa).

Residues 209–229 (ATISTPALGYAYFLFTLTLVF) form a helical membrane-spanning segment.

The protein localises to the host membrane. This is an uncharacterized protein from Saccharolobus islandicus (Sulfolobus islandicus).